The sequence spans 31 residues: Photosystem II reaction center protein T (31 aa).

Residues 3–23 (SAAYILVLALALGVIFFAIAF) traverse the membrane as a helical segment.

The protein belongs to the PsbT family. In terms of assembly, PSII is composed of 1 copy each of membrane proteins PsbA, PsbB, PsbC, PsbD, PsbE, PsbF, PsbH, PsbI, PsbJ, PsbK, PsbL, PsbM, PsbT, PsbX, PsbY, PsbZ, Psb30/Ycf12, peripheral proteins PsbO, CyanoQ (PsbQ), PsbU, PsbV and a large number of cofactors. It forms dimeric complexes.

The protein resides in the cellular thylakoid membrane. In terms of biological role, found at the monomer-monomer interface of the photosystem II (PS II) dimer, plays a role in assembly and dimerization of PSII. PSII is a light-driven water plastoquinone oxidoreductase, using light energy to abstract electrons from H(2)O, generating a proton gradient subsequently used for ATP formation. The chain is Photosystem II reaction center protein T from Trichodesmium erythraeum (strain IMS101).